A 312-amino-acid polypeptide reads, in one-letter code: Coproporphyrin III ferrochelatase (312 aa).

Residues Tyr13, Arg30, 46 to 47 (RY), Ser54, and Tyr125 each bind Fe-coproporphyrin III. Positions 182 and 263 each coordinate Fe(2+).

It belongs to the ferrochelatase family.

It is found in the cytoplasm. The enzyme catalyses Fe-coproporphyrin III + 2 H(+) = coproporphyrin III + Fe(2+). Its pathway is porphyrin-containing compound metabolism; protoheme biosynthesis. Its function is as follows. Involved in coproporphyrin-dependent heme b biosynthesis. Catalyzes the insertion of ferrous iron into coproporphyrin III to form Fe-coproporphyrin III. This chain is Coproporphyrin III ferrochelatase, found in Oceanobacillus iheyensis (strain DSM 14371 / CIP 107618 / JCM 11309 / KCTC 3954 / HTE831).